The following is a 116-amino-acid chain: UPF0102 protein ELI_05985 (116 aa).

The protein belongs to the UPF0102 family.

In Erythrobacter litoralis (strain HTCC2594), this protein is UPF0102 protein ELI_05985.